We begin with the raw amino-acid sequence, 572 residues long: Urease subunit alpha (572 aa).

The 439-residue stretch at 134–572 (GGIDAHVHMI…VSLGQLYFFS (439 aa)) folds into the Urease domain. 3 residues coordinate Ni(2+): H139, H141, and K222. At K222 the chain carries N6-carboxylysine. Position 224 (H224) interacts with substrate. H251 and H277 together coordinate Ni(2+). Catalysis depends on H325, which acts as the Proton donor. D365 provides a ligand contact to Ni(2+).

The protein belongs to the metallo-dependent hydrolases superfamily. Urease alpha subunit family. Heterotrimer of UreA (gamma), UreB (beta) and UreC (alpha) subunits. Three heterotrimers associate to form the active enzyme. Ni cation is required as a cofactor. Post-translationally, carboxylation allows a single lysine to coordinate two nickel ions.

The protein localises to the cytoplasm. It catalyses the reaction urea + 2 H2O + H(+) = hydrogencarbonate + 2 NH4(+). It participates in nitrogen metabolism; urea degradation; CO(2) and NH(3) from urea (urease route): step 1/1. The polypeptide is Urease subunit alpha (Laribacter hongkongensis (strain HLHK9)).